We begin with the raw amino-acid sequence, 529 residues long: 3-ketoacyl-CoA synthase 20 (529 aa).

Positions 1–22 are disordered; sequence MSHNQNQPHRPVPVHVTNAEPN. 2 consecutive transmembrane segments (helical) span residues 52 to 72 and 84 to 104; these read LYIL…SFTI and FHFL…TAYF. Positions 103-396 constitute an FAE domain; sequence YFTTRPRRVF…FFATLVARKV (294 aa). Catalysis depends on residues Cys247, His326, His415, His419, and Asn452.

The protein belongs to the thiolase-like superfamily. Chalcone/stilbene synthases family. As to expression, expressed in aerial organs. Expressed in leaves, flowers, siliques and stems. Expressed in roots, young seedlings, leaves, flowers and siliques.

The protein resides in the membrane. The enzyme catalyses a very-long-chain acyl-CoA + malonyl-CoA + H(+) = a very-long-chain 3-oxoacyl-CoA + CO2 + CoA. It functions in the pathway lipid metabolism; fatty acid biosynthesis. With respect to regulation, inhibited by K3 herbicides such as alachlor, allidochlor, anilofos, cafenstrole, fentrazamide and flufenacet. Strongly inhibited by metazachlor and only slightly by mefluidide. Mediates the synthesis of VLCFAs from 22 to 26 carbons in length (e.g. C22, C24, C26). Functionally redundant with KCS2 in the two-carbon elongation of C22 fatty acids that is required for cuticular wax and root suberin biosynthesis. The protein is 3-ketoacyl-CoA synthase 20 of Arabidopsis thaliana (Mouse-ear cress).